Consider the following 396-residue polypeptide: Probable arginine kinase F46H5.3 (396 aa).

Residues K47–N129 enclose the Phosphagen kinase N-terminal domain. Residue G102–Y106 participates in substrate binding. Positions F159–A396 constitute a Phosphagen kinase C-terminal domain. ATP contacts are provided by residues S162–R166 and H226. E266 is a substrate binding site. R270 lines the ATP pocket. C312 contacts substrate. ATP is bound by residues R321 to H325, R349 to E354, and D364. E354 is a binding site for substrate.

This sequence belongs to the ATP:guanido phosphotransferase family.

It catalyses the reaction L-arginine + ATP = N(omega)-phospho-L-arginine + ADP + H(+). The sequence is that of Probable arginine kinase F46H5.3 from Caenorhabditis elegans.